The following is a 144-amino-acid chain: Large ribosomal subunit protein uL15 (144 aa).

The tract at residues 1–54 (MRLNTLSPAEGSKKAGKRLGRGIGSGLGKTGGRGHKGQNSRSGGGVRRGFEGGQ) is disordered. A compositionally biased stretch (gly residues) spans 21–31 (RGIGSGLGKTG).

Belongs to the universal ribosomal protein uL15 family. Part of the 50S ribosomal subunit.

In terms of biological role, binds to the 23S rRNA. This is Large ribosomal subunit protein uL15 from Enterobacter sp. (strain 638).